Reading from the N-terminus, the 235-residue chain is Phosphoribosylaminoimidazole-succinocarboxamide synthase (235 aa).

The protein belongs to the SAICAR synthetase family.

It carries out the reaction 5-amino-1-(5-phospho-D-ribosyl)imidazole-4-carboxylate + L-aspartate + ATP = (2S)-2-[5-amino-1-(5-phospho-beta-D-ribosyl)imidazole-4-carboxamido]succinate + ADP + phosphate + 2 H(+). It participates in purine metabolism; IMP biosynthesis via de novo pathway; 5-amino-1-(5-phospho-D-ribosyl)imidazole-4-carboxamide from 5-amino-1-(5-phospho-D-ribosyl)imidazole-4-carboxylate: step 1/2. This is Phosphoribosylaminoimidazole-succinocarboxamide synthase from Sulfolobus acidocaldarius (strain ATCC 33909 / DSM 639 / JCM 8929 / NBRC 15157 / NCIMB 11770).